Reading from the N-terminus, the 284-residue chain is L-ribulose-5-phosphate 3-epimerase UlaE (284 aa).

It belongs to the L-ribulose-5-phosphate 3-epimerase family.

The enzyme catalyses L-ribulose 5-phosphate = L-xylulose 5-phosphate. The protein operates within cofactor degradation; L-ascorbate degradation; D-xylulose 5-phosphate from L-ascorbate: step 3/4. Catalyzes the isomerization of L-xylulose-5-phosphate to L-ribulose-5-phosphate. Is involved in the anaerobic L-ascorbate utilization. The sequence is that of L-ribulose-5-phosphate 3-epimerase UlaE from Escherichia coli O45:K1 (strain S88 / ExPEC).